Here is a 214-residue protein sequence, read N- to C-terminus: Orotate phosphoribosyltransferase (214 aa).

Residue K26 coordinates 5-phospho-alpha-D-ribose 1-diphosphate. 34–35 serves as a coordination point for orotate; sequence FF. Residues 72–73, R99, K100, K103, H105, and 124–132 contribute to the 5-phospho-alpha-D-ribose 1-diphosphate site; these read YK and DDVITAGTA. 2 residues coordinate orotate: T128 and R156.

Belongs to the purine/pyrimidine phosphoribosyltransferase family. PyrE subfamily. As to quaternary structure, homodimer. Mg(2+) serves as cofactor.

The enzyme catalyses orotidine 5'-phosphate + diphosphate = orotate + 5-phospho-alpha-D-ribose 1-diphosphate. The protein operates within pyrimidine metabolism; UMP biosynthesis via de novo pathway; UMP from orotate: step 1/2. Functionally, catalyzes the transfer of a ribosyl phosphate group from 5-phosphoribose 1-diphosphate to orotate, leading to the formation of orotidine monophosphate (OMP). The chain is Orotate phosphoribosyltransferase from Actinobacillus succinogenes (strain ATCC 55618 / DSM 22257 / CCUG 43843 / 130Z).